Consider the following 470-residue polypeptide: Diaminobutyrate--2-oxoglutarate aminotransferase (470 aa).

The residue at position 304 (Lys304) is an N6-(pyridoxal phosphate)lysine.

The protein belongs to the class-III pyridoxal-phosphate-dependent aminotransferase family. The cofactor is pyridoxal 5'-phosphate.

The enzyme catalyses L-2,4-diaminobutanoate + 2-oxoglutarate = L-aspartate 4-semialdehyde + L-glutamate. It functions in the pathway siderophore biosynthesis; rhizobactin biosynthesis. The protein is Diaminobutyrate--2-oxoglutarate aminotransferase (rhbA) of Rhizobium meliloti (strain 1021) (Ensifer meliloti).